The primary structure comprises 131 residues: RxLR effector protein 62 (131 aa).

The N-terminal stretch at 1-19 is a signal peptide; the sequence is MRLDILLFTLSSSTSLALS. A RxLR-dEER motif is present at residues 49 to 60; it reads RHLREEPANEAR. The N-linked (GlcNAc...) asparagine glycan is linked to asparagine 61.

It belongs to the RxLR effector family.

Its subcellular location is the secreted. The protein localises to the host cell. Functionally, secreted effector that suppresses callose deposition, a hallmark of pathogen-associated molecular pattern (PAMP)-triggered immunity (PTI) and renders host plants more susceptible to bacterial infection. Reduces host plant responsiveness to salicylic acid (SA) in haustoriated cells into which host-translocated effectors are delivered. This is RxLR effector protein 62 from Hyaloperonospora arabidopsidis (strain Emoy2) (Downy mildew agent).